Here is a 622-residue protein sequence, read N- to C-terminus: Galactolipid galactosyltransferase SFR2, chloroplastic (622 aa).

The Stromal portion of the chain corresponds to 1–3 (MEL). A helical; Signal-anchor transmembrane segment spans residues 4-24 (FALLIKVAGLLATVTVGANVV). At 25–622 (SYSRFRRQNL…LHPALASPFD (598 aa)) the chain is on the cytoplasmic side. Residues His222, 266 to 267 (NE), Tyr377, Glu429, Trp467, 474 to 475 (EW), and Phe483 each bind a beta-D-glucoside. Residue Glu267 is the Proton donor of the active site. Glu429 acts as the Nucleophile in catalysis.

This sequence belongs to the glycosyl hydrolase 1 family. In terms of tissue distribution, expressed in hypocotyls, cotyledons, stems, leaves, pedicels, sepals, anthers and pistils. Limited expression in roots. Not detected in petals or filaments.

The protein resides in the plastid. Its subcellular location is the chloroplast. It localises to the chloroplast outer membrane. The enzyme catalyses 2 a 1,2-diacyl-3-O-(beta-D-galactosyl)-sn-glycerol = a 1,2-diacyl-3-O-[beta-D-galactosyl-(1-&gt;6)-beta-D-galactosyl]-sn-glycerol + a 1,2-diacyl-sn-glycerol. With respect to regulation, induced by MgCl(2). Its function is as follows. Glycosyl hydrolase family protein acting primarily as a highly specific galactosyltransferase. Synthesizes digalactosyldiacylglycerol from monogalactosyldiacylglycerol in the absence of UDP-galactose in vitro. Hydrolyzes o- and p-nitrophenyl beta-D-glucoside in vitro. Plays a role in freezing tolerance. May play a role in chloroplast protection. The protein is Galactolipid galactosyltransferase SFR2, chloroplastic of Arabidopsis thaliana (Mouse-ear cress).